Consider the following 131-residue polypeptide: Global transcriptional regulator Spx 1 (131 aa).

A disulfide bridge connects residues Cys10 and Cys13.

It belongs to the ArsC family. Spx subfamily. As to quaternary structure, interacts with the C-terminal domain of the alpha subunit of the RNAP.

It is found in the cytoplasm. In terms of biological role, global transcriptional regulator that plays a key role in stress response and exerts either positive or negative regulation of genes. Acts by interacting with the C-terminal domain of the alpha subunit of the RNA polymerase (RNAP). This interaction can enhance binding of RNAP to the promoter region of target genes and stimulate their transcription, or block interaction of RNAP with activator. The polypeptide is Global transcriptional regulator Spx 1 (Oceanobacillus iheyensis (strain DSM 14371 / CIP 107618 / JCM 11309 / KCTC 3954 / HTE831)).